The chain runs to 286 residues: Homoserine kinase (286 aa).

An ATP-binding site is contributed by 78-88 (PLARGLGSSSS).

The protein belongs to the GHMP kinase family. Homoserine kinase subfamily.

The protein resides in the cytoplasm. The enzyme catalyses L-homoserine + ATP = O-phospho-L-homoserine + ADP + H(+). It participates in amino-acid biosynthesis; L-threonine biosynthesis; L-threonine from L-aspartate: step 4/5. Its function is as follows. Catalyzes the ATP-dependent phosphorylation of L-homoserine to L-homoserine phosphate. The chain is Homoserine kinase from Streptococcus thermophilus (strain CNRZ 1066).